The sequence spans 248 residues: Pyridoxine 5'-phosphate synthase (248 aa).

Asparagine 12 provides a ligand contact to 3-amino-2-oxopropyl phosphate. Position 14 to 15 (14 to 15) interacts with 1-deoxy-D-xylulose 5-phosphate; sequence DH. Residue arginine 23 coordinates 3-amino-2-oxopropyl phosphate. Histidine 48 acts as the Proton acceptor in catalysis. 1-deoxy-D-xylulose 5-phosphate-binding residues include arginine 50 and histidine 55. Glutamate 75 functions as the Proton acceptor in the catalytic mechanism. Threonine 105 lines the 1-deoxy-D-xylulose 5-phosphate pocket. Histidine 196 acts as the Proton donor in catalysis. 3-amino-2-oxopropyl phosphate contacts are provided by residues glycine 197 and 218 to 219; that span reads GH.

This sequence belongs to the PNP synthase family. As to quaternary structure, homooctamer; tetramer of dimers.

The protein localises to the cytoplasm. The enzyme catalyses 3-amino-2-oxopropyl phosphate + 1-deoxy-D-xylulose 5-phosphate = pyridoxine 5'-phosphate + phosphate + 2 H2O + H(+). It participates in cofactor biosynthesis; pyridoxine 5'-phosphate biosynthesis; pyridoxine 5'-phosphate from D-erythrose 4-phosphate: step 5/5. Functionally, catalyzes the complicated ring closure reaction between the two acyclic compounds 1-deoxy-D-xylulose-5-phosphate (DXP) and 3-amino-2-oxopropyl phosphate (1-amino-acetone-3-phosphate or AAP) to form pyridoxine 5'-phosphate (PNP) and inorganic phosphate. The polypeptide is Pyridoxine 5'-phosphate synthase (Stutzerimonas stutzeri (strain A1501) (Pseudomonas stutzeri)).